We begin with the raw amino-acid sequence, 277 residues long: Putative gamma-glutamylcyclotransferase YkqA (277 aa).

8–11 (YGTL) contributes to the substrate binding site. The active-site Proton acceptor is Glu205.

This sequence belongs to the gamma-glutamylcyclotransferase family.

In terms of biological role, putative gamma-glutamylcyclotransferase. The protein is Putative gamma-glutamylcyclotransferase YkqA (ykqA) of Bacillus subtilis (strain 168).